The chain runs to 499 residues: Maturase K (499 aa).

This sequence belongs to the intron maturase 2 family. MatK subfamily.

The protein resides in the plastid. The protein localises to the chloroplast. In terms of biological role, usually encoded in the trnK tRNA gene intron. Probably assists in splicing its own and other chloroplast group II introns. This is Maturase K from Ceratozamia mexicana (Mexican horncone).